The sequence spans 926 residues: Transcriptional activator protein acu-15 (926 aa).

Positions 24 to 51 (CDRCRSKKIRCDGIRPCCSQCANVGFEC) form a DNA-binding region, zn(2)-C6 fungal-type. Disordered stretches follow at residues 100–129 (KMHSNRSRSAEPPRSTPAAEIKRDSGTPAK), 602–649 (LPQS…SASL), and 667–801 (TPQH…TSTG). A compositionally biased stretch (basic and acidic residues) spans 119-129 (EIKRDSGTPAK). 2 stretches are compositionally biased toward low complexity: residues 623–632 (AQQGSPSPSA) and 669–681 (QHQQYQHQQLQQQ). Polar residues-rich tracts occupy residues 689–703 (ARSQTSFDNLRQKAQ) and 726–736 (RTSTGTQSTPN). Over residues 740–792 (LSLSSPQSPVSPVQMRSQPHQLQQQQQQQPQPQQQQQQHQRSSIASSHSQQGQ) the composition is skewed to low complexity.

It localises to the nucleus. Functionally, positive regulator of acetate induction. This Neurospora crassa (strain ATCC 24698 / 74-OR23-1A / CBS 708.71 / DSM 1257 / FGSC 987) protein is Transcriptional activator protein acu-15 (acu-15).